The chain runs to 349 residues: Transmembrane protein 255A (349 aa).

The next 4 helical transmembrane spans lie at 30–50, 57–77, 89–109, and 226–246; these read IYVT…GLAA, VTVG…LGII, LVAS…CAIV, and TILN…LGGF. Residues 301–329 are disordered; the sequence is VFPSSPPSGLSDEPQSASPSPSYMWSSSA. The span at 316 to 329 shows a compositional bias: low complexity; sequence SASPSPSYMWSSSA.

Belongs to the TMEM255 family.

Its subcellular location is the membrane. This is Transmembrane protein 255A (TMEM255A) from Macaca fascicularis (Crab-eating macaque).